Here is a 164-residue protein sequence, read N- to C-terminus: ATP synthase subunit b (164 aa).

Residues 6 to 26 (GELIGNFILITGSFILLLVLI) traverse the membrane as a helical segment.

This sequence belongs to the ATPase B chain family. As to quaternary structure, F-type ATPases have 2 components, F(1) - the catalytic core - and F(0) - the membrane proton channel. F(1) has five subunits: alpha(3), beta(3), gamma(1), delta(1), epsilon(1). F(0) has three main subunits: a(1), b(2) and c(10-14). The alpha and beta chains form an alternating ring which encloses part of the gamma chain. F(1) is attached to F(0) by a central stalk formed by the gamma and epsilon chains, while a peripheral stalk is formed by the delta and b chains.

Its subcellular location is the cell membrane. F(1)F(0) ATP synthase produces ATP from ADP in the presence of a proton or sodium gradient. F-type ATPases consist of two structural domains, F(1) containing the extramembraneous catalytic core and F(0) containing the membrane proton channel, linked together by a central stalk and a peripheral stalk. During catalysis, ATP synthesis in the catalytic domain of F(1) is coupled via a rotary mechanism of the central stalk subunits to proton translocation. Its function is as follows. Component of the F(0) channel, it forms part of the peripheral stalk, linking F(1) to F(0). This chain is ATP synthase subunit b, found in Streptococcus pneumoniae serotype 2 (strain D39 / NCTC 7466).